Reading from the N-terminus, the 317-residue chain is Putative AP2/ERF and B3 domain-containing protein Os01g0140700 (317 aa).

A disordered region spans residues 1-37 (MEQEAAMVVFSCNSGSGGSSSTTDSKQEEEEEEELAA). The span at 27–37 (QEEEEEEELAA) shows a compositional bias: acidic residues. Positions 66–121 (RYKGVVPQPNGRWGAQIYERHARVWLGTFPDEEAAARAYDVAALRFRGRDAVTNRA) form a DNA-binding region, AP2/ERF. The TF-B3 DNA-binding region spans 178-287 (FEKAVTPSDV…EKHLLIDCKK (110 aa)).

Its subcellular location is the nucleus. The chain is Putative AP2/ERF and B3 domain-containing protein Os01g0140700 from Oryza sativa subsp. japonica (Rice).